The sequence spans 290 residues: Glutamate racemase (290 aa).

Residues 24 to 25 (DS) and 56 to 57 (YG) contribute to the substrate site. The active-site Proton donor/acceptor is the C87. 88-89 (NT) serves as a coordination point for substrate. The active-site Proton donor/acceptor is C199. 200 to 201 (TH) contributes to the substrate binding site. Residues 271-290 (GADGASLPDPPSPRIELTTT) form a disordered region.

It belongs to the aspartate/glutamate racemases family.

The enzyme catalyses L-glutamate = D-glutamate. It functions in the pathway cell wall biogenesis; peptidoglycan biosynthesis. Provides the (R)-glutamate required for cell wall biosynthesis. This Deinococcus radiodurans (strain ATCC 13939 / DSM 20539 / JCM 16871 / CCUG 27074 / LMG 4051 / NBRC 15346 / NCIMB 9279 / VKM B-1422 / R1) protein is Glutamate racemase.